Here is a 745-residue protein sequence, read N- to C-terminus: Elongation factor G, mitochondrial (745 aa).

A mitochondrion-targeting transit peptide spans 1-15 (MSLITRLLTASSPLR). The tr-type G domain maps to 40–317 (DKIRNIGISA…AVLEYLPNPG (278 aa)). GTP-binding positions include 49–56 (AHIDSGKT), 116–120 (DTPGH), and 170–173 (NKLD).

The protein belongs to the TRAFAC class translation factor GTPase superfamily. Classic translation factor GTPase family. EF-G/EF-2 subfamily.

The protein localises to the mitochondrion. The protein operates within protein biosynthesis; polypeptide chain elongation. Mitochondrial GTPase that catalyzes the GTP-dependent ribosomal translocation step during translation elongation. During this step, the ribosome changes from the pre-translocational (PRE) to the post-translocational (POST) state as the newly formed A-site-bound peptidyl-tRNA and P-site-bound deacylated tRNA move to the P and E sites, respectively. Catalyzes the coordinated movement of the two tRNA molecules, the mRNA and conformational changes in the ribosome. Essential during development as it acts as a retrograde signal from mitochondria to the nucleus to slow down cell proliferation if mitochondrial energy output is low. This is Elongation factor G, mitochondrial (ico) from Drosophila ananassae (Fruit fly).